The chain runs to 249 residues: Triosephosphate isomerase (249 aa).

Substrate is bound at residue Asn-9 to Lys-11. The active-site Electrophile is the His-95. The active-site Proton acceptor is the Glu-166. Substrate is bound by residues Gly-172, Ser-211, and Gly-232 to Gly-233.

Belongs to the triosephosphate isomerase family. Homodimer.

The protein resides in the cytoplasm. It catalyses the reaction D-glyceraldehyde 3-phosphate = dihydroxyacetone phosphate. Its pathway is carbohydrate biosynthesis; gluconeogenesis. The protein operates within carbohydrate degradation; glycolysis; D-glyceraldehyde 3-phosphate from glycerone phosphate: step 1/1. In terms of biological role, involved in the gluconeogenesis. Catalyzes stereospecifically the conversion of dihydroxyacetone phosphate (DHAP) to D-glyceraldehyde-3-phosphate (G3P). This Legionella pneumophila (strain Lens) protein is Triosephosphate isomerase.